A 637-amino-acid polypeptide reads, in one-letter code: Protein arginine N-methyltransferase 5 (637 aa).

An N-acetylalanine modification is found at Ala2. The TIM barrel stretch occupies residues 13 to 292 (RVSSGRDLNC…YLEYLSQNRP (280 aa)). Residues 308–615 (LQSPLQPLMD…SNSKKVWYEW (308 aa)) form the SAM-dependent MTase PRMT-type domain. Residue Tyr324 coordinates S-adenosyl-L-methionine. Phe327 is a binding site for a protein. S-adenosyl-L-methionine is bound by residues 333–334 (KY), Glu392, and 419–420 (DM). Residues Glu435 and Glu444 each contribute to the a protein site. Catalysis depends on proton donor/acceptor residues Glu435 and Glu444. Residues 465–637 (PGEYTSFLAP…PTGRSYTIGL (173 aa)) are beta barrel. The interval 488-494 (REKDRDP) is dimerization.

The protein belongs to the class I-like SAM-binding methyltransferase superfamily. Protein arginine N-methyltransferase family. As to quaternary structure, forms, at least, homodimers and homotetramers. Component of the methylosome complex, composed of PRMT5, WDR77 and CLNS1A. Found in a complex composed of PRMT5, WDR77 and RIOK1. RIOK1 and CLNS1A associate with PRMT5 in a mutually exclusive fashion, which allows the recruitment of distinct methylation substrates, such as nucleolin/NCL and Sm proteins, respectively. Interacts with PRDM1. Identified in a complex composed of methylosome and PRMT1 and ERH. Interacts with EGFR; methylates EGFR and stimulates EGFR-mediated ERK activation. Interacts with HOXA9. Interacts with SRGAP2. Found in a complex with COPRS, RUNX1 and CBFB. Interacts with CHTOP; the interaction symmetrically methylates CHTOP, but seems to require the presence of PRMT1. Interacts with EPB41L3; this modulates methylation of target proteins. Component of a high molecular weight E2F-pocket protein complex, CERC (cyclin E1 repressor complex). Associates with SWI/SNF remodeling complexes containing SMARCA2 and SMARCA4. Interacts with JAK2, SSTR1, SUPT5H, BRAF and with active RAF1. Interacts with LSM11, PRMT7 and SNRPD3. Interacts with COPRS; promoting its recruitment on histone H4. Interacts with CLNS1A/pICln. Identified in a complex with CLNS1A/pICln and Sm proteins. Interacts with RPS10. Interacts with WDR77. Interacts with IWS1. Interacts with CRY1. Interacts with POLR2A. Interacts with SMN1/SMN2. Interacts with LYAR; this interaction is direct. Interacts with TTC5/STRAP; this interaction is DNA damage-dependent and promotes PRMT5 interaction with p53/TP53. Interacts with p53/TP53 in response to DNA damage; the interaction is TTC5/STRAP dependent. Interacts with FAM47E; the interaction is direct, promotes PRMT5 localization to chromatin, and does not disrupt its association with WDR77 or STUB1. Interacts with TDRD6. Interacts with STUB1. Interacts with MBD2. Does not interact with MBD3.

The protein localises to the cytoplasm. It is found in the nucleus. It localises to the golgi apparatus. It carries out the reaction L-arginyl-[protein] + 2 S-adenosyl-L-methionine = N(omega),N(omega)'-dimethyl-L-arginyl-[protein] + 2 S-adenosyl-L-homocysteine + 2 H(+). With respect to regulation, activity is increased by EGF, HGF, FGF1 or FGF2 treatments, and slightly decreased by NGF treatment. Arginine methyltransferase that can both catalyze the formation of omega-N monomethylarginine (MMA) and symmetrical dimethylarginine (sDMA), with a preference for the formation of MMA. Specifically mediates the symmetrical dimethylation of arginine residues in the small nuclear ribonucleoproteins Sm D1 (SNRPD1) and Sm D3 (SNRPD3); such methylation being required for the assembly and biogenesis of snRNP core particles. Methylates SUPT5H and may regulate its transcriptional elongation properties. May methylate the N-terminal region of MBD2. Mono- and dimethylates arginine residues of myelin basic protein (MBP) in vitro. May play a role in cytokine-activated transduction pathways. Negatively regulates cyclin E1 promoter activity and cellular proliferation. Methylates histone H2A and H4 'Arg-3' during germ cell development. Methylates histone H3 'Arg-8', which may repress transcription. Methylates the Piwi proteins (PIWIL1, PIWIL2 and PIWIL4), methylation of Piwi proteins being required for the interaction with Tudor domain-containing proteins and subsequent localization to the meiotic nuage. Methylates RPS10. Attenuates EGF signaling through the MAPK1/MAPK3 pathway acting at 2 levels. First, monomethylates EGFR; this enhances EGFR 'Tyr-1197' phosphorylation and PTPN6 recruitment, eventually leading to reduced SOS1 phosphorylation. Second, methylates RAF1 and probably BRAF, hence destabilizing these 2 signaling proteins and reducing their catalytic activity. Required for induction of E-selectin and VCAM-1, on the endothelial cells surface at sites of inflammation. Methylates HOXA9. Methylates and regulates SRGAP2 which is involved in cell migration and differentiation. Acts as a transcriptional corepressor in CRY1-mediated repression of the core circadian component PER1 by regulating the H4R3 dimethylation at the PER1 promoter. Methylates GM130/GOLGA2, regulating Golgi ribbon formation. Methylates H4R3 in genes involved in glioblastomagenesis in a CHTOP- and/or TET1-dependent manner. Symmetrically methylates POLR2A, a modification that allows the recruitment to POLR2A of proteins including SMN1/SMN2 and SETX. This is required for resolving RNA-DNA hybrids created by RNA polymerase II, that form R-loop in transcription terminal regions, an important step in proper transcription termination. Along with LYAR, binds the promoter of gamma-globin HBG1/HBG2 and represses its expression. Symmetrically methylates NCL. Methylates p53/TP53; methylation might possibly affect p53/TP53 target gene specificity. Involved in spliceosome maturation and mRNA splicing in prophase I spermatocytes through the catalysis of the symmetrical arginine dimethylation of SNRPB (small nuclear ribonucleoprotein-associated protein) and the interaction with tudor domain-containing protein TDRD6. This chain is Protein arginine N-methyltransferase 5 (PRMT5), found in Macaca fascicularis (Crab-eating macaque).